The chain runs to 244 residues: Protein IN2-1 homolog B (244 aa).

The tract at residues 1-27 (MAAAAAAPASSEKEVLPPSLTSSSEPP) is disordered. The region spanning 32 to 113 (GTTRLYVAYH…YIDTNFEGPA (82 aa)) is the GST N-terminal domain. Residues Val-85 and 97-98 (ES) each bind glutathione. The GST C-terminal domain maps to 118–241 (DSEKQQFAEE…FLLEHTKKRL (124 aa)).

The chain is Protein IN2-1 homolog B (GSTZ5) from Oryza sativa subsp. indica (Rice).